Here is a 242-residue protein sequence, read N- to C-terminus: TGACG-sequence-specific DNA-binding protein TGA-1B (242 aa).

The interval 1–125 (EFCDFSGNQA…HSSPNFENNS (125 aa)) is disordered. A compositionally biased stretch (polar residues) spans 18 to 45 (DTSSPELRQSSSGSDVLNATSSTSSHQV). Basic and acidic residues predominate over residues 66 to 79 (EGSRESANDNKGLG). Positions 88 to 125 (SPESQGSGNYGSNVSEGLNYPSDSNKSVHSSPNFENNS) are enriched in polar residues. The 60-residue stretch at 183 to 242 (DEKKRARLVRNRESAQLSRQRKKHYVEELEDKVRIMHSTIQDLNAKVAYIIAENATLKTQ) folds into the bZIP domain. A basic motif region spans residues 185–216 (KKRARLVRNRESAQLSRQRKKHYVEELEDKVR). The interval 225–239 (LNAKVAYIIAENATL) is leucine-zipper.

The protein belongs to the bZIP family.

The protein resides in the nucleus. Binds specifically to the DNA sequence 5'-TGACG-3'. The chain is TGACG-sequence-specific DNA-binding protein TGA-1B (TGA1B) from Nicotiana tabacum (Common tobacco).